Here is a 719-residue protein sequence, read N- to C-terminus: Polyribonucleotide nucleotidyltransferase (719 aa).

The Mg(2+) site is built by aspartate 507 and aspartate 513. Residues 573 to 633 (PKLELFSVDP…EQIKAAKDYI (61 aa)) form the KH domain. The S1 motif domain occupies 658 to 719 (GQEFQGIVKK…NGKISVDLCE (62 aa)).

This sequence belongs to the polyribonucleotide nucleotidyltransferase family. The cofactor is Mg(2+).

The protein resides in the cytoplasm. The catalysed reaction is RNA(n+1) + phosphate = RNA(n) + a ribonucleoside 5'-diphosphate. In terms of biological role, involved in mRNA degradation. Catalyzes the phosphorolysis of single-stranded polyribonucleotides processively in the 3'- to 5'-direction. The chain is Polyribonucleotide nucleotidyltransferase from Campylobacter jejuni subsp. jejuni serotype O:23/36 (strain 81-176).